The primary structure comprises 83 residues: uncharacterized protein (83 aa).

This is an uncharacterized protein from Archaeoglobus fulgidus (strain ATCC 49558 / DSM 4304 / JCM 9628 / NBRC 100126 / VC-16).